Here is a 709-residue protein sequence, read N- to C-terminus: Protein transport protein SEC39 (709 aa).

Belongs to the SEC39 family. As to quaternary structure, component of a peripheral membrane protein complex consisting of DSL1, SEC39/DSL3 and TIP20. Bound to a SNARE complex consisting of UFE1, USE1, SEC20 and SEC22 or YKT6 through direct interaction of TIP20 with SEC20. Interacts with TIP20 and DSL1.

The protein resides in the endoplasmic reticulum membrane. In terms of biological role, required for protein transport between the Golgi and the endoplasmic reticulum. May contribute to tethering of coatomer-coated retrograde transport vesicles to the ER membrane through interaction with and stabilization of the SNARE complex. The sequence is that of Protein transport protein SEC39 from Saccharomyces cerevisiae (strain ATCC 204508 / S288c) (Baker's yeast).